A 394-amino-acid polypeptide reads, in one-letter code: Queuine tRNA-ribosyltransferase (394 aa).

Asp95 serves as the catalytic Proton acceptor. Residues 95-99 (DSGGF), Asp149, Gln190, and Gly217 contribute to the substrate site. Positions 248-254 (GVGTPID) are RNA binding. Asp267 acts as the Nucleophile in catalysis. Positions 272-276 (TRNAR) are RNA binding; important for wobble base 34 recognition. Zn(2+)-binding residues include Cys305, Cys307, Cys310, and His337. The tract at residues 375 to 394 (NDANETVGATESTESTESTE) is disordered.

It belongs to the queuine tRNA-ribosyltransferase family. In terms of assembly, homodimer. Within each dimer, one monomer is responsible for RNA recognition and catalysis, while the other monomer binds to the replacement base PreQ1. Requires Zn(2+) as cofactor.

The catalysed reaction is 7-aminomethyl-7-carbaguanine + guanosine(34) in tRNA = 7-aminomethyl-7-carbaguanosine(34) in tRNA + guanine. The protein operates within tRNA modification; tRNA-queuosine biosynthesis. In terms of biological role, catalyzes the base-exchange of a guanine (G) residue with the queuine precursor 7-aminomethyl-7-deazaguanine (PreQ1) at position 34 (anticodon wobble position) in tRNAs with GU(N) anticodons (tRNA-Asp, -Asn, -His and -Tyr). Catalysis occurs through a double-displacement mechanism. The nucleophile active site attacks the C1' of nucleotide 34 to detach the guanine base from the RNA, forming a covalent enzyme-RNA intermediate. The proton acceptor active site deprotonates the incoming PreQ1, allowing a nucleophilic attack on the C1' of the ribose to form the product. After dissociation, two additional enzymatic reactions on the tRNA convert PreQ1 to queuine (Q), resulting in the hypermodified nucleoside queuosine (7-(((4,5-cis-dihydroxy-2-cyclopenten-1-yl)amino)methyl)-7-deazaguanosine). In Sorangium cellulosum (strain So ce56) (Polyangium cellulosum (strain So ce56)), this protein is Queuine tRNA-ribosyltransferase.